The primary structure comprises 774 residues: Lon protease 2 (774 aa).

The region spanning 5-198 is the Lon N-terminal domain; it reads YPLMPLRDIV…LLLEILFREL (194 aa). 350–357 provides a ligand contact to ATP; that stretch reads GPPGVGKT. One can recognise a Lon proteolytic domain in the interval 588-769; that stretch reads RDEVGLATGL…DQVLEQALLS (182 aa). Catalysis depends on residues Ser-675 and Lys-718.

It belongs to the peptidase S16 family. In terms of assembly, homohexamer. Organized in a ring with a central cavity.

It is found in the cytoplasm. It carries out the reaction Hydrolysis of proteins in presence of ATP.. ATP-dependent serine protease that mediates the selective degradation of mutant and abnormal proteins as well as certain short-lived regulatory proteins. Required for cellular homeostasis and for survival from DNA damage and developmental changes induced by stress. Degrades polypeptides processively to yield small peptide fragments that are 5 to 10 amino acids long. Binds to DNA in a double-stranded, site-specific manner. The protein is Lon protease 2 of Desulfotalea psychrophila (strain LSv54 / DSM 12343).